A 367-amino-acid chain; its full sequence is Queuine tRNA-ribosyltransferase (367 aa).

Asp92 (proton acceptor) is an active-site residue. Substrate contacts are provided by residues 92-96 (DSGGF), Asp146, Gln188, and Gly215. The tract at residues 246-252 (GVGTPKD) is RNA binding. The active-site Nucleophile is Asp265. Zn(2+) contacts are provided by Cys303, Cys305, Cys308, and His334.

This sequence belongs to the queuine tRNA-ribosyltransferase family. Homodimer. Within each dimer, one monomer is responsible for RNA recognition and catalysis, while the other monomer binds to the replacement base PreQ1. It depends on Zn(2+) as a cofactor.

It carries out the reaction 7-aminomethyl-7-carbaguanine + guanosine(34) in tRNA = 7-aminomethyl-7-carbaguanosine(34) in tRNA + guanine. Its pathway is tRNA modification; tRNA-queuosine biosynthesis. In terms of biological role, catalyzes the base-exchange of a guanine (G) residue with the queuine precursor 7-aminomethyl-7-deazaguanine (PreQ1) at position 34 (anticodon wobble position) in tRNAs with GU(N) anticodons (tRNA-Asp, -Asn, -His and -Tyr). Catalysis occurs through a double-displacement mechanism. The nucleophile active site attacks the C1' of nucleotide 34 to detach the guanine base from the RNA, forming a covalent enzyme-RNA intermediate. The proton acceptor active site deprotonates the incoming PreQ1, allowing a nucleophilic attack on the C1' of the ribose to form the product. After dissociation, two additional enzymatic reactions on the tRNA convert PreQ1 to queuine (Q), resulting in the hypermodified nucleoside queuosine (7-(((4,5-cis-dihydroxy-2-cyclopenten-1-yl)amino)methyl)-7-deazaguanosine). The protein is Queuine tRNA-ribosyltransferase of Francisella tularensis subsp. mediasiatica (strain FSC147).